A 43-amino-acid chain; its full sequence is Cytochrome b559 subunit beta (43 aa).

The helical transmembrane segment at 18–34 (WLAIHGLAIPTVFFFGA) threads the bilayer. Histidine 22 is a binding site for heme.

This sequence belongs to the PsbE/PsbF family. Heterodimer of an alpha subunit and a beta subunit. PSII is composed of 1 copy each of membrane proteins PsbA, PsbB, PsbC, PsbD, PsbE, PsbF, PsbH, PsbI, PsbJ, PsbK, PsbL, PsbM, PsbT, PsbY, PsbZ, Psb30/Ycf12, at least 3 peripheral proteins of the oxygen-evolving complex and a large number of cofactors. It forms dimeric complexes. Heme b is required as a cofactor.

The protein resides in the plastid. It is found in the chloroplast thylakoid membrane. In terms of biological role, this b-type cytochrome is tightly associated with the reaction center of photosystem II (PSII). PSII is a light-driven water:plastoquinone oxidoreductase that uses light energy to abstract electrons from H(2)O, generating O(2) and a proton gradient subsequently used for ATP formation. It consists of a core antenna complex that captures photons, and an electron transfer chain that converts photonic excitation into a charge separation. The sequence is that of Cytochrome b559 subunit beta from Cyanidium caldarium (Red alga).